Consider the following 363-residue polypeptide: Adenylate cyclase 2 (363 aa).

One can recognise a Guanylate cyclase domain in the interval 157 to 286 (VFLFIDLAGS…DTVNTTARLE (130 aa)). Positions 162 and 206 each coordinate Mg(2+). The interval 341-363 (GDGATEPAGETVRSPAAEAFTSL) is disordered.

Belongs to the adenylyl cyclase class-3 family. It depends on Mg(2+) as a cofactor.

The enzyme catalyses ATP = 3',5'-cyclic AMP + diphosphate. In terms of biological role, plays essential roles in regulation of cellular metabolism by catalyzing the synthesis of a second messenger, cAMP. The polypeptide is Adenylate cyclase 2 (cya2) (Rhizobium meliloti (strain 1021) (Ensifer meliloti)).